A 491-amino-acid polypeptide reads, in one-letter code: Cytochrome P450 2F2 (491 aa).

Cys436 is a binding site for heme.

The protein belongs to the cytochrome P450 family. Requires heme as cofactor. As to expression, club cells in lung and liver.

Its subcellular location is the endoplasmic reticulum membrane. It localises to the microsome membrane. In terms of biological role, involved in the regio- and stereoselective transformation of naphthalene to trans-1R-hydroxy-2R-glutathionyl-1,2-dihydronaphthalene in the presence of glutathione and glutathione S-transferases. It specifically catalyzes the production of a very reactive and potentially toxic intermediate, the 2R,2S arene oxide, that is associated with necrosis of the unciliated bronchiolar epithelial cells or club cells in lung. The polypeptide is Cytochrome P450 2F2 (Cyp2f2) (Mus musculus (Mouse)).